Here is a 328-residue protein sequence, read N- to C-terminus: Putative thiosulfate sulfurtransferase mpst-1 (328 aa).

Rhodanese domains follow at residues 22–162 (NKEG…EVST) and 202–320 (KTSE…KKIS). The Cysteine persulfide intermediate role is filled by Cys278.

It carries out the reaction thiosulfate + hydrogen cyanide = thiocyanate + sulfite + 2 H(+). This Caenorhabditis elegans protein is Putative thiosulfate sulfurtransferase mpst-1 (mpst-1).